Reading from the N-terminus, the 422-residue chain is Adenylosuccinate synthetase (422 aa).

GTP is bound by residues 11-17 and 39-41; these read GDEGKGK and GHT. Asp12 (proton acceptor) is an active-site residue. Mg(2+) is bound by residues Asp12 and Gly39. IMP-binding positions include 12 to 15, 37 to 40, Thr129, Arg143, Asn219, Thr234, and Arg298; these read DEGK and NAGH. The active-site Proton donor is His40. 294–300 is a binding site for substrate; the sequence is VTTGRRR. Residues Arg300, 326-328, and 409-411 each bind GTP; these read KLD and GTG.

This sequence belongs to the adenylosuccinate synthetase family. In terms of assembly, homodimer. Mg(2+) serves as cofactor.

The protein resides in the cytoplasm. The catalysed reaction is IMP + L-aspartate + GTP = N(6)-(1,2-dicarboxyethyl)-AMP + GDP + phosphate + 2 H(+). The protein operates within purine metabolism; AMP biosynthesis via de novo pathway; AMP from IMP: step 1/2. Plays an important role in the de novo pathway and in the salvage pathway of purine nucleotide biosynthesis. Catalyzes the first committed step in the biosynthesis of AMP from IMP. In Ajellomyces capsulatus (strain H143) (Darling's disease fungus), this protein is Adenylosuccinate synthetase.